The chain runs to 520 residues: Maturase K (520 aa).

Belongs to the intron maturase 2 family. MatK subfamily.

The protein localises to the plastid. It is found in the chloroplast. Usually encoded in the trnK tRNA gene intron. Probably assists in splicing its own and other chloroplast group II introns. This Liriope muscari (Big blue lilyturf) protein is Maturase K.